The primary structure comprises 142 residues: Large ribosomal subunit protein uL11 (142 aa).

It belongs to the universal ribosomal protein uL11 family. As to quaternary structure, part of the ribosomal stalk of the 50S ribosomal subunit. Interacts with L10 and the large rRNA to form the base of the stalk. L10 forms an elongated spine to which L12 dimers bind in a sequential fashion forming a multimeric L10(L12)X complex. One or more lysine residues are methylated.

Its function is as follows. Forms part of the ribosomal stalk which helps the ribosome interact with GTP-bound translation factors. This Serratia proteamaculans (strain 568) protein is Large ribosomal subunit protein uL11.